The following is a 325-amino-acid chain: Beta-ketoacyl-[acyl-carrier-protein] synthase III (325 aa).

Residues cysteine 119 and histidine 252 contribute to the active site. The segment at 253 to 257 (QANIR) is ACP-binding. The active site involves asparagine 282.

This sequence belongs to the thiolase-like superfamily. FabH family. In terms of assembly, homodimer.

The protein resides in the cytoplasm. It catalyses the reaction malonyl-[ACP] + acetyl-CoA + H(+) = 3-oxobutanoyl-[ACP] + CO2 + CoA. It functions in the pathway lipid metabolism; fatty acid biosynthesis. In terms of biological role, catalyzes the condensation reaction of fatty acid synthesis by the addition to an acyl acceptor of two carbons from malonyl-ACP. Catalyzes the first condensation reaction which initiates fatty acid synthesis and may therefore play a role in governing the total rate of fatty acid production. Possesses both acetoacetyl-ACP synthase and acetyl transacylase activities. Its substrate specificity determines the biosynthesis of branched-chain and/or straight-chain of fatty acids. This is Beta-ketoacyl-[acyl-carrier-protein] synthase III from Polaromonas sp. (strain JS666 / ATCC BAA-500).